Here is a 95-residue protein sequence, read N- to C-terminus: Co-chaperonin GroES (95 aa).

It belongs to the GroES chaperonin family. As to quaternary structure, heptamer of 7 subunits arranged in a ring. Interacts with the chaperonin GroEL.

It localises to the cytoplasm. Its function is as follows. Together with the chaperonin GroEL, plays an essential role in assisting protein folding. The GroEL-GroES system forms a nano-cage that allows encapsulation of the non-native substrate proteins and provides a physical environment optimized to promote and accelerate protein folding. GroES binds to the apical surface of the GroEL ring, thereby capping the opening of the GroEL channel. The polypeptide is Co-chaperonin GroES (Stenotrophomonas maltophilia (strain R551-3)).